The chain runs to 1131 residues: cGMP-specific 3',5'-cyclic phosphodiesterase (1131 aa).

2 disordered regions span residues 1-26 (MTDV…SAAT) and 42-150 (GVAP…SQQD). The span at 42–63 (GVAPGAVPGPGSAAIPASSSSG) shows a compositional bias: low complexity. Polar residues predominate over residues 75-86 (SNNNRPAATNRS). The segment covering 110 to 136 (SSSTPSQSPSPSQSPSQASIQTQTSQQ) has biased composition (low complexity). GAF domains are found at residues 255–412 (DIDV…GIGI) and 444–625 (NLEC…GLGI). Residues 655–978 (SQDQTEKLTQ…RNWQDLAEKV (324 aa)) enclose the PDEase domain. The Proton donor role is filled by His-731. Positions 735, 771, 772, and 882 each coordinate a divalent metal cation. Disordered stretches follow at residues 1019–1048 (QQSQ…TGAL) and 1078–1131 (SHVS…CALL). Composition is skewed to basic and acidic residues over residues 1024–1035 (GSEDSHTPEHQR) and 1078–1088 (SHVSEDMDDKS). Low complexity predominate over residues 1097 to 1117 (ASGSMGRMSASSSTSSAGGQM). Residues 1121–1131 (SKKRSKLCALL) are compositionally biased toward basic residues. A Cysteine methyl ester modification is found at Cys-1128. Residue Cys-1128 is the site of S-farnesyl cysteine attachment. Residues 1129-1131 (ALL) constitute a propeptide, removed in mature form.

This sequence belongs to the cyclic nucleotide phosphodiesterase family. In terms of assembly, interacts with PrBP. A divalent metal cation serves as cofactor.

The protein localises to the cell membrane. It catalyses the reaction 3',5'-cyclic GMP + H2O = GMP + H(+). Functionally, has a role regulating cGMP transport in Malpighian tubule principal cells. This is cGMP-specific 3',5'-cyclic phosphodiesterase from Drosophila erecta (Fruit fly).